Consider the following 257-residue polypeptide: 5'-nucleotidase SurE (257 aa).

A divalent metal cation-binding residues include D8, D9, S40, and N97.

It belongs to the SurE nucleotidase family. It depends on a divalent metal cation as a cofactor.

The protein resides in the cytoplasm. The enzyme catalyses a ribonucleoside 5'-phosphate + H2O = a ribonucleoside + phosphate. Functionally, nucleotidase that shows phosphatase activity on nucleoside 5'-monophosphates. The sequence is that of 5'-nucleotidase SurE from Desulforudis audaxviator (strain MP104C).